A 438-amino-acid chain; its full sequence is Glutamyl-tRNA reductase (438 aa).

Substrate is bound by residues 49–52, serine 109, 114–116, and glutamine 120; these read TCNR and EQQ. The Nucleophile role is filled by cysteine 50. 191-196 lines the NADP(+) pocket; that stretch reads GAGAMA.

The protein belongs to the glutamyl-tRNA reductase family. As to quaternary structure, homodimer.

The catalysed reaction is (S)-4-amino-5-oxopentanoate + tRNA(Glu) + NADP(+) = L-glutamyl-tRNA(Glu) + NADPH + H(+). It functions in the pathway porphyrin-containing compound metabolism; protoporphyrin-IX biosynthesis; 5-aminolevulinate from L-glutamyl-tRNA(Glu): step 1/2. Catalyzes the NADPH-dependent reduction of glutamyl-tRNA(Glu) to glutamate 1-semialdehyde (GSA). The protein is Glutamyl-tRNA reductase of Corynebacterium diphtheriae (strain ATCC 700971 / NCTC 13129 / Biotype gravis).